The sequence spans 439 residues: Taxadien-5-alpha-ol O-acetyltransferase (439 aa).

Residues His-164 and Asp-373 each act as proton acceptor in the active site.

The protein belongs to the plant acyltransferase family.

It carries out the reaction taxa-4(20),11-dien-5alpha-ol + acetyl-CoA = taxa-4(20),11-dien-5alpha-yl acetate + CoA. It participates in alkaloid biosynthesis; taxol biosynthesis; 10-deacetyl-2-debenzoylbaccatin III from taxa-4(20),11-dien-5alpha-ol: step 1/3. This Taxus chinensis (Chinese yew) protein is Taxadien-5-alpha-ol O-acetyltransferase.